The primary structure comprises 309 residues: Probable 4-hydroxy-2-oxoglutarate aldolase, mitochondrial (309 aa).

Residue 49–50 (SN) participates in substrate binding. Lys-173 (schiff-base intermediate with substrate) is an active-site residue.

The protein belongs to the DapA family.

It catalyses the reaction (4S)-4-hydroxy-2-oxoglutarate = glyoxylate + pyruvate. The enzyme catalyses (4R)-4-hydroxy-2-oxoglutarate = glyoxylate + pyruvate. Its activity is regulated as follows. Inhibited by divalent cations. Catalyzes the final step in the metabolic pathway of hydroxyproline. Involved in osmoadaptation. The polypeptide is Probable 4-hydroxy-2-oxoglutarate aldolase, mitochondrial (Emericella nidulans (strain FGSC A4 / ATCC 38163 / CBS 112.46 / NRRL 194 / M139) (Aspergillus nidulans)).